The sequence spans 881 residues: Alanine--tRNA ligase (881 aa).

Zn(2+) is bound by residues His568, His572, Cys670, and His674.

This sequence belongs to the class-II aminoacyl-tRNA synthetase family. Zn(2+) serves as cofactor.

It localises to the cytoplasm. The enzyme catalyses tRNA(Ala) + L-alanine + ATP = L-alanyl-tRNA(Ala) + AMP + diphosphate. Its function is as follows. Catalyzes the attachment of alanine to tRNA(Ala) in a two-step reaction: alanine is first activated by ATP to form Ala-AMP and then transferred to the acceptor end of tRNA(Ala). Also edits incorrectly charged Ser-tRNA(Ala) and Gly-tRNA(Ala) via its editing domain. This chain is Alanine--tRNA ligase, found in Clostridium acetobutylicum (strain ATCC 824 / DSM 792 / JCM 1419 / IAM 19013 / LMG 5710 / NBRC 13948 / NRRL B-527 / VKM B-1787 / 2291 / W).